The sequence spans 255 residues: Imidazole glycerol phosphate synthase subunit HisF (255 aa).

Catalysis depends on residues aspartate 12 and aspartate 131.

Belongs to the HisA/HisF family. Heterodimer of HisH and HisF.

It is found in the cytoplasm. It carries out the reaction 5-[(5-phospho-1-deoxy-D-ribulos-1-ylimino)methylamino]-1-(5-phospho-beta-D-ribosyl)imidazole-4-carboxamide + L-glutamine = D-erythro-1-(imidazol-4-yl)glycerol 3-phosphate + 5-amino-1-(5-phospho-beta-D-ribosyl)imidazole-4-carboxamide + L-glutamate + H(+). It participates in amino-acid biosynthesis; L-histidine biosynthesis; L-histidine from 5-phospho-alpha-D-ribose 1-diphosphate: step 5/9. Functionally, IGPS catalyzes the conversion of PRFAR and glutamine to IGP, AICAR and glutamate. The HisF subunit catalyzes the cyclization activity that produces IGP and AICAR from PRFAR using the ammonia provided by the HisH subunit. This Neisseria meningitidis serogroup C / serotype 2a (strain ATCC 700532 / DSM 15464 / FAM18) protein is Imidazole glycerol phosphate synthase subunit HisF.